The sequence spans 238 residues: Probable transcriptional regulatory protein YeeN (238 aa).

Belongs to the TACO1 family. YeeN subfamily.

The protein resides in the cytoplasm. This chain is Probable transcriptional regulatory protein YeeN, found in Salmonella choleraesuis (strain SC-B67).